Here is a 508-residue protein sequence, read N- to C-terminus: tRNA(Ile2) 2-agmatinylcytidine synthetase TiaS (508 aa).

Residues Ile-367–Val-427 constitute a DNA-binding region (OB).

Belongs to the TiaS family.

It is found in the cytoplasm. The catalysed reaction is cytidine(34) in tRNA(Ile2) + agmatine + ATP + H2O = 2-agmatinylcytidine(34) in tRNA(Ile2) + AMP + 2 phosphate + 2 H(+). In terms of biological role, ATP-dependent agmatine transferase that catalyzes the formation of 2-agmatinylcytidine (agm2C) at the wobble position (C34) of tRNA(Ile2), converting the codon specificity from AUG to AUA. The chain is tRNA(Ile2) 2-agmatinylcytidine synthetase TiaS from Methanococcus voltae (strain ATCC BAA-1334 / A3).